A 149-amino-acid chain; its full sequence is Succinate dehydrogenase assembly factor 2, mitochondrial (149 aa).

This sequence belongs to the SDHAF2 family. Interacts with the flavoprotein subunit within the SDH catalytic dimer.

The protein resides in the mitochondrion matrix. Its function is as follows. Plays an essential role in the assembly of succinate dehydrogenase (SDH), an enzyme complex (also referred to as respiratory complex II) that is a component of both the tricarboxylic acid (TCA) cycle and the mitochondrial electron transport chain, and which couples the oxidation of succinate to fumarate with the reduction of ubiquinone (coenzyme Q) to ubiquinol. Required for flavinylation (covalent attachment of FAD) of the flavoprotein subunit of the SDH catalytic dimer. The protein is Succinate dehydrogenase assembly factor 2, mitochondrial of Scheffersomyces stipitis (strain ATCC 58785 / CBS 6054 / NBRC 10063 / NRRL Y-11545) (Yeast).